Here is a 538-residue protein sequence, read N- to C-terminus: MVRSSCLQCDQPSQGSNSTFGCGGPLAAVCATGLLVLVLYSPSSQTANWSAQGISTKALYPAVPVPSTLLPGSAPAKHQLHVWRAHAMSEATTNNSFKQSLFGYNAISSIWLQLAGVAATFFAFGALMAAVTQRKEIAVFSASGQAAEPEGAEPLKRPFPSPAAKPKPLFSTPANSFSNIFQAPPSLRTDSTYGRGPRSTSFTDISNWPSNNALRNPQSVIDIGGGVDFLGDRSPGNPFTRLRGSPSSTLSNLGMGLGLGLGKGKGFGKGFGKGRGFPVEEEVEEEQEVLSWADRRRALADPDAPPMNEDIKYPQLRLVRAVPGGRDEKLGVMSRQEALELAEAEDIDLVLVSIDTDPPVAKLVNYSKLKYESEKKKKDSHKKGKVKEVKELKVSHKIGQHDYDVRVKQARKFLEGGHRIKVSMEFKGRENQFVEIGRAVMKRFQNDLADMGKADAVPKKLGTRLILNLAPAGEALKVIAERRAERDRKAAAEEEGEGDDLDFVDENEDEDVEGEGEEEEAEELEEETAEGTEVPTRS.

The N-terminal 140 residues, 1–140 (MVRSSCLQCD…VTQRKEIAVF (140 aa)), are a transit peptide targeting the chloroplast. Residues 141-290 (SASGQAAEPE…EEVEEEQEVL (150 aa)) form a head region. Disordered regions lie at residues 146–165 (AAEP…PAAK) and 188–210 (RTDS…NWPS). An IF-3 like region spans residues 291–474 (SWADRRRALA…LILNLAPAGE (184 aa)). Residues 484 to 538 (AERDRKAAAEEEGEGDDLDFVDENEDEDVEGEGEEEEAEELEEETAEGTEVPTRS) form a disordered region. Positions 493–530 (EEEGEGDDLDFVDENEDEDVEGEGEEEEAEELEEETAE) are enriched in acidic residues.

This sequence belongs to the IF-3 family. In terms of assembly, monomer. Post-translationally, the N-terminus is blocked.

It is found in the plastid. The protein localises to the chloroplast. Involved in chloroplast protein synthesis. It enhances the poly(A,U,G)-dependent binding of the initiator tRNA to chloroplast 30S subunits. This is Translation initiation factor IF-3, chloroplastic from Euglena gracilis.